The sequence spans 488 residues: Cobyric acid synthase (488 aa).

One can recognise a GATase cobBQ-type domain in the interval 247-440; it reads LLRVIVPVLP…VHGVFDEPTA (194 aa). Residue C328 is the Nucleophile of the active site. H432 is a catalytic residue.

This sequence belongs to the CobB/CobQ family. CobQ subfamily.

It participates in cofactor biosynthesis; adenosylcobalamin biosynthesis. Its function is as follows. Catalyzes amidations at positions B, D, E, and G on adenosylcobyrinic A,C-diamide. NH(2) groups are provided by glutamine, and one molecule of ATP is hydrogenolyzed for each amidation. This chain is Cobyric acid synthase, found in Cupriavidus pinatubonensis (strain JMP 134 / LMG 1197) (Cupriavidus necator (strain JMP 134)).